The chain runs to 114 residues: SCP2 domain-containing protein YusD (114 aa).

One can recognise an SCP2 domain in the interval 21-101 (NASTLLITFQ…RALLKLEAIL (81 aa)).

The chain is SCP2 domain-containing protein YusD (yusD) from Bacillus subtilis (strain 168).